The sequence spans 264 residues: Exodeoxyribonuclease YycJ (264 aa).

Residues His58, His60, Asp62, His63, and Asp145 each contribute to the a divalent metal cation site.

The protein belongs to the metallo-beta-lactamase superfamily. Requires Fe(2+) as cofactor. It depends on Zn(2+) as a cofactor. The cofactor is Mn(2+).

In terms of biological role, 5'-&gt;3' double-stranded DNA exonuclease. May play a role in mutation mismatch repair (MMR). Required for accurate coordination of cell division with DNA replication. May play a role in cell wall metabolism. This is Exodeoxyribonuclease YycJ from Bacillus anthracis.